The following is a 201-amino-acid chain: Protein VirD3 (201 aa).

Disordered regions lie at residues 28 to 51 (ASSS…SSSR) and 139 to 171 (RVNS…VTPA). Basic and acidic residues predominate over residues 141–161 (NSDRRLPTDAENHPETRDPRK).

This chain is Protein VirD3 (virD3), found in Rhizobium radiobacter (Agrobacterium tumefaciens).